A 1996-amino-acid chain; its full sequence is Non-reducing polyketide synthase atnG (1996 aa).

Residues F9–H245 are N-terminal acylcarrier protein transacylase (SAT) domain. The region spanning S366–E794 is the Ketosynthase family 3 (KS3) domain. Active-site for beta-ketoacyl synthase activity residues include C538, H673, and H713. A malonyl-CoA:ACP transacylase (MAT) domain region spans residues A891–C1150. S982 acts as the For acyl/malonyl transferase activity in catalysis. The interval H1263–D1392 is N-terminal hotdog fold. In terms of domain architecture, PKS/mFAS DH spans H1263 to H1569. The tract at residues S1267–L1568 is product template (PT) domain. Catalysis depends on H1295, which acts as the Proton acceptor; for dehydratase activity. Residues A1416–H1569 are C-terminal hotdog fold. Catalysis depends on D1481, which acts as the Proton donor; for dehydratase activity. A disordered region spans residues G1573–H1621. Positions P1594–Q1607 are enriched in polar residues. The Carrier domain occupies G1620–E1697. An O-(pantetheine 4'-phosphoryl)serine modification is found at S1657. Positions K1725–K1923 are thioesterase (TE) domain.

Its pathway is secondary metabolite biosynthesis; terpenoid biosynthesis. Non-reducing polyketide synthase; part of the gene cluster that mediates the biosynthesis of the meroterpenoids arthripenoids. The pathway begins with the HR-PKS atnH that catalyzes two chain-extension steps to form a reduced triketide, which then primes the SAT domain in the NR-PKS atnG to initiate three more cycles of extension to give a linear hexaketide corresponding to the polyketide part of arthripenoids. The FAD-dependent monooxygenase atnJ then performs an oxidative decarboxylation at C11 of the atnH/atnG product, via an electrophilic aromatic hydroxylation with concomitant ipso-decarboxylation. The membrane-bound polyprenyl transferase atnF then introduces a farnesyl group before the FAD-dependent monooxygenase atnK functions as the first epoxidase on terminal C12'-C13' olefin, followed by a second epoxidation on C7'-C8' catalyzed by atnA. The terpene cyclase/mutase atnI then initiates the sequential tricyclic ring formation through protonation of the terminal epoxide and catalyzes the regioselective and stereoselective 6/6/6-tricyclic ring formation. The cytochrome P450 monooxygenase atnM is responsible for hydroxylating both C1' and C10'. The next steps may involve ketoreduction and acetyl transfer by the ketoreductase atnB and the acetyltransferase atnC, and lead to the production of arthripenoid B, the final biosynthetic product of the atn cluster. The hydroquinone moiety in arthripenoid B is prone to undergo spontaneous oxidation to afford a benzoquinone compound, a key intermediate for generating structure diversity. For instance, addition of a cysteine followed by ring contraction gives arthripenoid A, tautomerization gives the main product arthripenoid C, addition of a molecular of water or amine affords arthripenoid D or E, respectively, and loss of one water forms arthripenoid F. The sequence is that of Non-reducing polyketide synthase atnG from Arthrinium sp.